The sequence spans 154 residues: Myoglobin (154 aa).

The Globin domain occupies 2 to 148 (GLSDGEWQLV…FRNDIAAKYK (147 aa)). S4 is subject to Phosphoserine. H65 serves as a coordination point for nitrite. Residue H65 coordinates O2. T68 bears the Phosphothreonine mark. Heme b is bound at residue H94.

This sequence belongs to the globin family. In terms of assembly, monomeric.

It localises to the cytoplasm. The protein localises to the sarcoplasm. The catalysed reaction is Fe(III)-heme b-[protein] + nitric oxide + H2O = Fe(II)-heme b-[protein] + nitrite + 2 H(+). It carries out the reaction H2O2 + AH2 = A + 2 H2O. Monomeric heme protein which primary function is to store oxygen and facilitate its diffusion within muscle tissues. Reversibly binds oxygen through a pentacoordinated heme iron and enables its timely and efficient release as needed during periods of heightened demand. Depending on the oxidative conditions of tissues and cells, and in addition to its ability to bind oxygen, it also has a nitrite reductase activity whereby it regulates the production of bioactive nitric oxide. Under stress conditions, like hypoxia and anoxia, it also protects cells against reactive oxygen species thanks to its pseudoperoxidase activity. The chain is Myoglobin (MB) from Lagostomus maximus (Plains viscacha).